The chain runs to 145 residues: Ribonuclease P protein component (145 aa).

A compositionally biased stretch (low complexity) spans 120 to 130 (LPAAPGTMPPA). The disordered stretch occupies residues 120–145 (LPAAPGTMPPARTMHPSSLSPTEPDL). Residues 134–145 (HPSSLSPTEPDL) are compositionally biased toward polar residues.

It belongs to the RnpA family. Consists of a catalytic RNA component (M1 or rnpB) and a protein subunit.

The enzyme catalyses Endonucleolytic cleavage of RNA, removing 5'-extranucleotides from tRNA precursor.. Its function is as follows. RNaseP catalyzes the removal of the 5'-leader sequence from pre-tRNA to produce the mature 5'-terminus. It can also cleave other RNA substrates such as 4.5S RNA. The protein component plays an auxiliary but essential role in vivo by binding to the 5'-leader sequence and broadening the substrate specificity of the ribozyme. This Xanthomonas oryzae pv. oryzae (strain MAFF 311018) protein is Ribonuclease P protein component.